The chain runs to 65 residues: Large ribosomal subunit protein bL35 (65 aa).

Residues 1–22 form a disordered region; it reads MPKMKTKSSAKKRFKVTGSGKI.

The protein belongs to the bacterial ribosomal protein bL35 family.

This Flavobacterium johnsoniae (strain ATCC 17061 / DSM 2064 / JCM 8514 / BCRC 14874 / CCUG 350202 / NBRC 14942 / NCIMB 11054 / UW101) (Cytophaga johnsonae) protein is Large ribosomal subunit protein bL35.